We begin with the raw amino-acid sequence, 145 residues long: Large ribosomal subunit protein bL9 (145 aa).

It belongs to the bacterial ribosomal protein bL9 family.

Binds to the 23S rRNA. The polypeptide is Large ribosomal subunit protein bL9 (Mesomycoplasma hyopneumoniae (strain 232) (Mycoplasma hyopneumoniae)).